The following is an 889-amino-acid chain: MDRFDVPKEIGDITFGLLSPEQIRTMSVAKIVTADTYDDDGYPIDGGLMDTRLGVIDPGLVCKSCSGRVGTCPGHFGHIELSKSVIHIGFAKDIYKLLKAVCPHCGKVTVTEIKRDEYLEKMLKLEEDGGDPWTLSDDLLKEAAKSSVCPSCGEVKYDIKYDKPTTYHQLDGKSQKQLTSSEVREILEKIPNEDCKLLGINSRVARPEYMVLTVLPVPPVTVRPSITLESGERSEDDLTHKLVDIIRINQRLEENINGGAPNLIIEDLWDLLQYHINTYFDNEAPGIPPARHRSGRPLRTLAQRLKGKEGRFRHNLAGKRVNFSARTVISPDPRLSINEVGIPELIAKELTVPEKVTPYNIERIRKLIENGSDKHPGVNYVIKKVKTKDGKEEEYKIKITDTNKKMWVENIVDGMVVERHLGDGDVVLYNRQPSLHRMSIMAHKVKVLPYRTFRHNLCVCPPYNADFDGDEMNVHVPQSEEARAEAETLMLVEKHIISPRYGGPIIGAIHDFVSGAYVLTSSNFIKDEALTLLKSSGFGSELGEPDFVENGIEYYSGKSLFSKTLPKGLNLQYKAKVCKKCVQCKREECENDAFVIIRNGRLVQGVIDKNGFGAETGVVLNTIVKDFGSEDARTFLDSATKMSVKSMMLRGFTTGIDDEDIPSEAIQEIQDLLDKAESDVQEIVERYEGGTLDPLPGRGIEESREAYIMQILGKARDDTGKVAEKYLSKENHAALMARTGARGSLLNITMMAASVGQQSVRGGRVFRGYRGRTLPHFGEGSLDAKSHGFVRSCYKKGLAPTEYFFHAMGGREGLVDQAVRTAQSGYMQRRLVNALQDIKAEYDGTVRDSRGIIVQFNYGEDLVDPSKADHGKGVDLDKVFTKVISKYEN.

Zn(2+) contacts are provided by Cys62, Cys65, Cys72, His75, Cys102, Cys105, Cys149, and Cys152. Positions 466, 468, and 470 each coordinate Mg(2+).

This sequence belongs to the RNA polymerase beta' chain family. Part of the RNA polymerase complex. It depends on Mg(2+) as a cofactor. Zn(2+) is required as a cofactor.

It localises to the cytoplasm. It carries out the reaction RNA(n) + a ribonucleoside 5'-triphosphate = RNA(n+1) + diphosphate. Its function is as follows. DNA-dependent RNA polymerase (RNAP) catalyzes the transcription of DNA into RNA using the four ribonucleoside triphosphates as substrates. Forms the clamp head domain. In Methanococcus vannielii (strain ATCC 35089 / DSM 1224 / JCM 13029 / OCM 148 / SB), this protein is DNA-directed RNA polymerase subunit Rpo1N.